Reading from the N-terminus, the 95-residue chain is Co-chaperonin GroES (95 aa).

Belongs to the GroES chaperonin family. Heptamer of 7 subunits arranged in a ring. Interacts with the chaperonin GroEL.

It localises to the cytoplasm. Its function is as follows. Together with the chaperonin GroEL, plays an essential role in assisting protein folding. The GroEL-GroES system forms a nano-cage that allows encapsulation of the non-native substrate proteins and provides a physical environment optimized to promote and accelerate protein folding. GroES binds to the apical surface of the GroEL ring, thereby capping the opening of the GroEL channel. The protein is Co-chaperonin GroES of Ruthia magnifica subsp. Calyptogena magnifica.